Here is a 316-residue protein sequence, read N- to C-terminus: Transaldolase (316 aa).

Residue lysine 126 is the Schiff-base intermediate with substrate of the active site.

It belongs to the transaldolase family. Type 1 subfamily. In terms of assembly, homodimer.

The protein resides in the cytoplasm. The catalysed reaction is D-sedoheptulose 7-phosphate + D-glyceraldehyde 3-phosphate = D-erythrose 4-phosphate + beta-D-fructose 6-phosphate. The protein operates within carbohydrate degradation; pentose phosphate pathway; D-glyceraldehyde 3-phosphate and beta-D-fructose 6-phosphate from D-ribose 5-phosphate and D-xylulose 5-phosphate (non-oxidative stage): step 2/3. Functionally, transaldolase is important for the balance of metabolites in the pentose-phosphate pathway. The polypeptide is Transaldolase (Methylibium petroleiphilum (strain ATCC BAA-1232 / LMG 22953 / PM1)).